A 203-amino-acid polypeptide reads, in one-letter code: Protein GrpE (203 aa).

Basic and acidic residues predominate over residues 1–10 (MSNESIKAEQ). The tract at residues 1–20 (MSNESIKAEQDLIQEGVESE) is disordered.

Belongs to the GrpE family. Homodimer.

It localises to the cytoplasm. Participates actively in the response to hyperosmotic and heat shock by preventing the aggregation of stress-denatured proteins, in association with DnaK and GrpE. It is the nucleotide exchange factor for DnaK and may function as a thermosensor. Unfolded proteins bind initially to DnaJ; upon interaction with the DnaJ-bound protein, DnaK hydrolyzes its bound ATP, resulting in the formation of a stable complex. GrpE releases ADP from DnaK; ATP binding to DnaK triggers the release of the substrate protein, thus completing the reaction cycle. Several rounds of ATP-dependent interactions between DnaJ, DnaK and GrpE are required for fully efficient folding. The chain is Protein GrpE from Shewanella sp. (strain MR-7).